We begin with the raw amino-acid sequence, 349 residues long: ATPase GET3 (349 aa).

Residue 27-34 (KGGVGKTT) coordinates ATP. Residue aspartate 58 is part of the active site. The ATP site is built by glutamate 240 and asparagine 267. Residues cysteine 280 and cysteine 283 each contribute to the Zn(2+) site.

This sequence belongs to the arsA ATPase family. In terms of assembly, homodimer. Component of the Golgi to ER traffic (GET) complex, which is composed of GET1, GET2 and GET3. Within the complex, GET1 and GET2 form a heterotetramer which is stabilized by phosphatidylinositol binding and which binds to the GET3 homodimer. Interacts with the chloride channel protein GEF1.

It is found in the cytoplasm. It localises to the endoplasmic reticulum. Its subcellular location is the golgi apparatus. ATPase required for the post-translational delivery of tail-anchored (TA) proteins to the endoplasmic reticulum. Recognizes and selectively binds the transmembrane domain of TA proteins in the cytosol. This complex then targets to the endoplasmic reticulum by membrane-bound receptors GET1 and GET2, where the tail-anchored protein is released for insertion. This process is regulated by ATP binding and hydrolysis. ATP binding drives the homodimer towards the closed dimer state, facilitating recognition of newly synthesized TA membrane proteins. ATP hydrolysis is required for insertion. Subsequently, the homodimer reverts towards the open dimer state, lowering its affinity for the GET1-GET2 receptor, and returning it to the cytosol to initiate a new round of targeting. Cooperates with the HDEL receptor ERD2 to mediate the ATP-dependent retrieval of resident ER proteins that contain a C-terminal H-D-E-L retention signal from the Golgi to the ER. Involved in low-level resistance to the oxyanions arsenite and arsenate, and in heat tolerance. In Eremothecium gossypii (strain ATCC 10895 / CBS 109.51 / FGSC 9923 / NRRL Y-1056) (Yeast), this protein is ATPase GET3.